Here is a 243-residue protein sequence, read N- to C-terminus: Voltage-gated monoatomic cation channel TMEM109 (243 aa).

The signal sequence occupies residues 1 to 33 (MAGSGSSAPWGKHLLHAVLMVLVALVLLHSALA). Residues 34–83 (QSHRDFAPPGQQRREAPVDLLTQIGRSVRETLDTWIGPETMHLISETLSQ) lie on the Lumenal side of the membrane. The chain crosses the membrane as a helical span at residues 84–104 (VMWAISSAISVAFFALSGIAA). The Cytoplasmic segment spans residues 105–135 (QLLTALGLDGDHLTQGLKLSPSQVQTFLLWG). Residues 136 to 156 (AGALVVYWLLSLLLGLVLAVL) form a helical membrane-spanning segment. The Lumenal portion of the chain corresponds to 157 to 185 (GRILGGLKLVIFLAGFVALVRSVPDPSTR). Residues 186–205 (ALLLLALLTLYALLSRLTGS) traverse the membrane as a helical segment. Topologically, residues 206 to 243 (RASGAQLEAKVRGLERQVDELRWRQRRAAKGARSVEEE) are cytoplasmic.

Homooligomer. Interacts with CRYAB; in the cellular response to DNA damage. The N-terminus is blocked. As to expression, widely expressed. Expressed in skeletal, cardiac and smooth muscle cells, in brain, including neuroglial cells, cerebral cortex neurons and cerebellum, but not Purkinje cells. Also detected in Paneth and Goblet cells of the small intestine (but not in the epithelium), duodenal gland, pancreas, parotid gland, testis, thyroid gland and adrenal gland, as well as in epidermis, choroid plexus, ductus epididymidis, lymphocytes, fibroblasts, endothelial cells and seminiferous epithelial cells (at protein level). Not detected in mucous cells of the duodenal gland, in hepatocytes nor in uriniferous tubules.

The protein localises to the nucleus outer membrane. It is found in the endoplasmic reticulum membrane. Its subcellular location is the sarcoplasmic reticulum membrane. The enzyme catalyses K(+)(in) = K(+)(out). It carries out the reaction Ca(2+)(in) = Ca(2+)(out). Its function is as follows. Functions as a voltage-gated monoatomic cation channel permeable to both potassium and calcium. Plays a role in the cellular response to DNA damage. This is Voltage-gated monoatomic cation channel TMEM109 from Oryctolagus cuniculus (Rabbit).